A 415-amino-acid polypeptide reads, in one-letter code: L-cysteine:1D-myo-inositol 2-amino-2-deoxy-alpha-D-glucopyranoside ligase (415 aa).

Cysteine 43 lines the Zn(2+) pocket. L-cysteinyl-5'-AMP-binding positions include 43-46 (CGIT), threonine 58, and 81-83 (NVT). Positions 45–55 (ITPYDATHLGH) match the 'HIGH' region motif. A 'ERGGDP' region motif is present at residues 188 to 193 (ERGGDP). Residue tryptophan 229 coordinates L-cysteinyl-5'-AMP. Cysteine 233 lines the Zn(2+) pocket. 251–253 (GSD) provides a ligand contact to L-cysteinyl-5'-AMP. Histidine 258 contacts Zn(2+). Residue valine 285 participates in L-cysteinyl-5'-AMP binding. The 'KMSKS' region signature appears at 291 to 295 (KMSKS).

This sequence belongs to the class-I aminoacyl-tRNA synthetase family. MshC subfamily. In terms of assembly, monomer. It depends on Zn(2+) as a cofactor.

The enzyme catalyses 1D-myo-inositol 2-amino-2-deoxy-alpha-D-glucopyranoside + L-cysteine + ATP = 1D-myo-inositol 2-(L-cysteinylamino)-2-deoxy-alpha-D-glucopyranoside + AMP + diphosphate + H(+). In terms of biological role, catalyzes the ATP-dependent condensation of GlcN-Ins and L-cysteine to form L-Cys-GlcN-Ins. This chain is L-cysteine:1D-myo-inositol 2-amino-2-deoxy-alpha-D-glucopyranoside ligase, found in Cellulomonas flavigena (strain ATCC 482 / DSM 20109 / BCRC 11376 / JCM 18109 / NBRC 3775 / NCIMB 8073 / NRS 134).